A 476-amino-acid polypeptide reads, in one-letter code: Protein transport protein SEC61 subunit alpha (476 aa).

Residues 1 to 33 are Cytoplasmic-facing; sequence MSSLRFLDLVKPFVPFLPEVQQPETKIPFNQKL. Residues 34 to 54 traverse the membrane as a helical segment; it reads MWTGLTLLIFLVMSQMPLYGI. Over 55 to 76 the chain is Lumenal; that stretch reads VSSDTSDPLYWLRMMMASNRGT. A helical membrane pass occupies residues 77–97; the sequence is LMELGITPIISSGMVFQLLAG. The Cytoplasmic portion of the chain corresponds to 98-119; that stretch reads THMIDVNLDLKADRELYQTAQK. The helical transmembrane segment at 120–140 threads the bilayer; the sequence is LFAVILSIGTATVYVFTGLYG. The Lumenal portion of the chain corresponds to 141 to 146; the sequence is PPSDLG. The chain crosses the membrane as a helical span at residues 147 to 167; sequence AGIVFLLILQLVVAGMIVILL. Residues 168-246 lie on the Cytoplasmic side of the membrane; it reads DELLQKGYGL…YRQNLPNIMN (79 aa). The chain crosses the membrane as a helical span at residues 247-267; it reads LLATLVVFAAVIYLQGFRVEI. The Lumenal segment spans residues 268–361; the sequence is PVKSSRQRGA…KDALLDPIHT (94 aa). Residues 362–382 traverse the membrane as a helical segment; sequence AVYIAYMLTACAVFSKTWIEV. Topologically, residues 383 to 415 are cytoplasmic; sequence SGSSPRDVAKQLKDQGLVMAGHREQSMYKELKR. A helical membrane pass occupies residues 416 to 434; sequence IIPTAAAFGGACIGALSVA. At 435-440 the chain is on the lumenal side; that stretch reads SDLMGA. The helical transmembrane segment at 441–458 threads the bilayer; the sequence is LGSGTGTLLAVTIIYGYF. The Cytoplasmic portion of the chain corresponds to 459-476; that stretch reads EIAAKEGDLQGMKGMIMG.

It belongs to the SecY/SEC61-alpha family. As to quaternary structure, heterotrimeric complex composed of SEC61-alpha, SEC61-beta and SEC61-gamma.

It localises to the endoplasmic reticulum membrane. Its function is as follows. Appears to play a crucial role in the insertion of secretory and membrane polypeptides into the ER. It is required for assembly of membrane and secretory proteins and is essential for cell growth. It interacts with other membrane proteins required for protein translocation. Upon binding to SEC62/63 complex, secretory precursor polypeptides may engage SEC61 to begin membrane penetration event. A cycle of assembly and disassembly of SEC62/63 from SEC61 may govern the activity of the translocase. This chain is Protein transport protein SEC61 subunit alpha (sec-61), found in Neurospora crassa (strain ATCC 24698 / 74-OR23-1A / CBS 708.71 / DSM 1257 / FGSC 987).